The sequence spans 564 residues: Dihydroxy-acid dehydratase (564 aa).

[2Fe-2S] cluster is bound at residue C53. D85 is a binding site for Mg(2+). Residue C126 coordinates [2Fe-2S] cluster. Residues D127 and K128 each coordinate Mg(2+). Position 128 is an N6-carboxylysine (K128). C203 lines the [2Fe-2S] cluster pocket. E454 contacts Mg(2+). S480 (proton acceptor) is an active-site residue.

This sequence belongs to the IlvD/Edd family. As to quaternary structure, homodimer. [2Fe-2S] cluster is required as a cofactor. Mg(2+) serves as cofactor.

It carries out the reaction (2R)-2,3-dihydroxy-3-methylbutanoate = 3-methyl-2-oxobutanoate + H2O. It catalyses the reaction (2R,3R)-2,3-dihydroxy-3-methylpentanoate = (S)-3-methyl-2-oxopentanoate + H2O. It participates in amino-acid biosynthesis; L-isoleucine biosynthesis; L-isoleucine from 2-oxobutanoate: step 3/4. The protein operates within amino-acid biosynthesis; L-valine biosynthesis; L-valine from pyruvate: step 3/4. Functions in the biosynthesis of branched-chain amino acids. Catalyzes the dehydration of (2R,3R)-2,3-dihydroxy-3-methylpentanoate (2,3-dihydroxy-3-methylvalerate) into 2-oxo-3-methylpentanoate (2-oxo-3-methylvalerate) and of (2R)-2,3-dihydroxy-3-methylbutanoate (2,3-dihydroxyisovalerate) into 2-oxo-3-methylbutanoate (2-oxoisovalerate), the penultimate precursor to L-isoleucine and L-valine, respectively. The polypeptide is Dihydroxy-acid dehydratase (Mycobacterium leprae (strain TN)).